Here is a 326-residue protein sequence, read N- to C-terminus: 3-dehydrosphinganine reductase TSC10A (326 aa).

Topologically, residues 1–7 (MAAISPL) are lumenal. A helical transmembrane segment spans residues 8–28 (FLLFLIPIIPLSLLAILALIV). At 29–264 (RPRPIKIPIK…KAMDGIKAGN (236 aa)) the chain is on the cytoplasmic side. Positions 46, 48, 49, 50, 71, 75, and 97 each coordinate NADPH. The GXSXG signature appears at 46-50 (GGSSG). The active-site Proton donor is Ser-174. Tyr-188 (proton acceptor) is an active-site residue. Residues Tyr-188 and Lys-192 each contribute to the NADP(+) site. Lys-192 serves as the catalytic Lowers pKa of active site Tyr. Residues 265–285 (FTVSCNFEGFLLSLATTGMSP) traverse the membrane as a helical segment. Residues 286-288 (QRS) lie on the Lumenal side of the membrane. Residues 289-309 (FWLAFLEVITAGPIRLIALFF) form a helical membrane-spanning segment. Residues 310–326 (QWDWYKAIEKWSKTKTK) are Cytoplasmic-facing.

Belongs to the short-chain dehydrogenases/reductases (SDR) family. Expressed in roots, leaves, stems, flowers and siliques.

Its subcellular location is the endoplasmic reticulum membrane. It catalyses the reaction sphinganine + NADP(+) = 3-oxosphinganine + NADPH + H(+). It functions in the pathway lipid metabolism; sphingolipid metabolism. Catalyzes the reduction of 3'-oxosphinganine (3-ketodihydrosphingosine/KDS) to sphinganine (dihydrosphingosine/DHS), the second step of de novo sphingolipid biosynthesis. In plants, sphingolipids seems to play a critical role in mineral ion homeostasis, most likely through their involvement in the ion transport functionalities of membrane systems in the root. Lacks stereospecificity and can also produce L-threo-DHS in addition to D-erythro-DHS. The sequence is that of 3-dehydrosphinganine reductase TSC10A (TSC10A) from Arabidopsis thaliana (Mouse-ear cress).